A 1479-amino-acid chain; its full sequence is WASH complex subunit 2 (1479 aa).

The span at 1-17 (MPEEQPQQQQQPVREQP) shows a compositional bias: low complexity. 5 disordered regions span residues 1–25 (MPEEQPQQQQQPVREQPSNPDDVPW), 188–210 (GGLVEGGEQAGTDAQPSANTEKK), 240–564 (FIED…GGVK), 576–1383 (FSGK…FDDI), and 1419–1479 (TSTT…NLFD). Residues 242-279 (EDSDSDSSDEEDEEDVDAEDGSDESSSESSSDDDDEKD) are compositionally biased toward acidic residues. A compositionally biased stretch (low complexity) spans 334–349 (SKKSSNSYTSSLSDIL). Acidic residues predominate over residues 422–431 (DDDLFGDSEE). 2 stretches are compositionally biased toward low complexity: residues 465-475 (TTTSSQPQQKK) and 514-532 (TPKPKSTTTSAAPTATTTK). The residue at position 535 (Thr-535) is a Phosphothreonine. Polar residues predominate over residues 542–552 (ASGSESTTGKS). Residues 595–620 (TESKASEDDFFSSDKKSTSATKKDAE) are compositionally biased toward basic and acidic residues. Positions 709–723 (PKAPTTATTTTTTKP) are enriched in low complexity. The segment covering 765 to 781 (TETKKQPITEEPKKKQD) has biased composition (basic and acidic residues). The segment covering 802 to 814 (ASISPASPVSTIE) has biased composition (polar residues). The segment covering 839–885 (DLTKDEPAKSEPTKVEPTKVEPTKAEPTKVEPAKVEPTKVESDKKES) has biased composition (basic and acidic residues). Residues 904-916 (KNPTTSSSTTATE) show a composition bias toward polar residues. Positions 951 to 968 (SSTTKKSTTTTTTTTSSK) are enriched in low complexity. The span at 981 to 990 (KKVEEKKSSD) shows a compositional bias: basic and acidic residues. 2 stretches are compositionally biased toward low complexity: residues 991–1000 (FDSFFSGSDD) and 1010–1021 (KTTTTPPLTSTT). A compositionally biased stretch (polar residues) spans 1062-1075 (PLTSNNTKNRTKSI). Positions 1091–1107 (EKNRSESPTSEKAEPTK) are enriched in basic and acidic residues. The segment covering 1108-1123 (KTSNISSLQNKLSLNP) has biased composition (polar residues). Residues 1147-1162 (STNNDNDSSATDLSDS) show a composition bias toward low complexity. Composition is skewed to polar residues over residues 1163–1174 (GRSSPSVTSPTL) and 1220–1236 (KSGTSAPNRSESPTPTQ). Position 1249 is a phosphoserine (Ser-1249). Residues 1277–1292 (EKTSSGKSSPSPTIKS) show a composition bias toward low complexity. Residues 1307-1317 (ASTTTKPTASE) show a composition bias toward polar residues. Residues 1327–1358 (KKSEPETPKETPKETPKEKEQTKEKEQPKETP) show a composition bias toward basic and acidic residues. Low complexity-rich tracts occupy residues 1419–1445 (TSTTSKSTTTTTTTTTTKAKSTKAVDN) and 1452–1466 (NTTTKATPTKATPSK).

Belongs to the FAM21 family. In terms of assembly, probable component of the WASH complex.

The chain is WASH complex subunit 2 from Dictyostelium discoideum (Social amoeba).